We begin with the raw amino-acid sequence, 157 residues long: Short-type peptidyl-prolyl cis-trans isomerase (157 aa).

The 95-residue stretch at 1-95 folds into the PPIase FKBP-type domain; that stretch reads MINLIKKGDY…RDERLIQEIP (95 aa). An IF region spans residues 86–137; it reads RDERLIQEIPKEMFADADFEPQEGMLILASGIPAKIIKVTDDTVTLDFNHEL.

It belongs to the FKBP-type PPIase family.

It is found in the cytoplasm. It catalyses the reaction [protein]-peptidylproline (omega=180) = [protein]-peptidylproline (omega=0). Its function is as follows. Catalyzes the cis-trans isomerization of peptidyl prolyl bonds and accelerates protein folding. Also exhibits chaperone-like activity. In Methanocaldococcus jannaschii (strain ATCC 43067 / DSM 2661 / JAL-1 / JCM 10045 / NBRC 100440) (Methanococcus jannaschii), this protein is Short-type peptidyl-prolyl cis-trans isomerase.